We begin with the raw amino-acid sequence, 64 residues long: Conotoxin Im11.4 (64 aa).

Residues 1–26 (MMFRLTSVSCILLVIAFLNLVGLTNA) form the signal peptide. Cystine bridges form between cysteine 27–cysteine 41, cysteine 34–cysteine 46, cysteine 40–cysteine 50, and cysteine 45–cysteine 54. Histidine 57 bears the Histidine amide mark. The propeptide occupies 61 to 64 (ATFQ).

This sequence belongs to the conotoxin I2 superfamily. Expressed by the venom duct.

It localises to the secreted. This Conus imperialis (Imperial cone) protein is Conotoxin Im11.4.